The primary structure comprises 379 residues: Leukocyte elastase inhibitor A (379 aa).

Position 300 is a phosphoserine (Ser300). A CARD-binding motif (CBM) region spans residues 351–379 (EFTVDHPFIFFIRHNPTSNVLFLGRVCSP).

The protein belongs to the serpin family. Ov-serpin subfamily. In terms of assembly, monomer. Interacts (via C-terminus) with CASP1 and CASP4 (via CARD domain); these interactions regulate the activity of inflammatory caspases. As to expression, ubiquitous with higher expression in pancreas, spleen and bone marrow.

It is found in the secreted. The protein resides in the cytoplasm. The protein localises to the cytolytic granule. It localises to the early endosome. Neutrophil serine protease inhibitor that plays an essential role in the regulation of the innate immune response, inflammation and cellular homeostasis. Acts primarily to protect the cell from proteases released in the cytoplasm during stress or infection. These proteases are important in killing microbes but when released from granules, these potent enzymes also destroy host proteins and contribute to mortality. Regulates the activity of the neutrophil proteases elastase, cathepsin G, proteinase-3, chymase, chymotrypsin, and kallikrein-3. Also acts as a potent intracellular inhibitor of granzyme H. During inflammation, limits the activity of inflammatory caspases CASP1 and CASP4 by suppressing their caspase-recruitment domain (CARD) oligomerization and enzymatic activation. In addition, promotes the proliferation of beta-cells when secreted. This chain is Leukocyte elastase inhibitor A (Serpinb1a), found in Mus musculus (Mouse).